A 232-amino-acid chain; its full sequence is 2,3,4,5-tetrahydropyridine-2,6-dicarboxylate N-acetyltransferase (232 aa).

The protein belongs to the transferase hexapeptide repeat family. DapH subfamily.

The catalysed reaction is (S)-2,3,4,5-tetrahydrodipicolinate + acetyl-CoA + H2O = L-2-acetamido-6-oxoheptanedioate + CoA. The protein operates within amino-acid biosynthesis; L-lysine biosynthesis via DAP pathway; LL-2,6-diaminopimelate from (S)-tetrahydrodipicolinate (acetylase route): step 1/3. Catalyzes the transfer of an acetyl group from acetyl-CoA to tetrahydrodipicolinate. The sequence is that of 2,3,4,5-tetrahydropyridine-2,6-dicarboxylate N-acetyltransferase from Streptococcus uberis (strain ATCC BAA-854 / 0140J).